A 213-amino-acid chain; its full sequence is Pyrrolidone-carboxylate peptidase (213 aa).

Residues glutamate 78, cysteine 141, and histidine 165 contribute to the active site.

The protein belongs to the peptidase C15 family. In terms of assembly, homotetramer.

It localises to the cytoplasm. The catalysed reaction is Release of an N-terminal pyroglutamyl group from a polypeptide, the second amino acid generally not being Pro.. In terms of biological role, removes 5-oxoproline from various penultimate amino acid residues except L-proline. The chain is Pyrrolidone-carboxylate peptidase from Clostridium perfringens (strain 13 / Type A).